The following is a 433-amino-acid chain: 26S proteasome regulatory subunit 7 (433 aa).

The segment at Met1 to Arg23 is disordered. Basic and acidic residues predominate over residues Asp8–Arg23. Gly216–Thr223 is an ATP binding site.

Belongs to the AAA ATPase family. In terms of processing, phosphorylated. Dephosphorylated by ublcp1 which impairs psmc2 ATPase activity and disrupts 26S proteasome assembly.

Its subcellular location is the cytoplasm. It is found in the nucleus. In terms of biological role, the 26S proteasome is involved in the ATP-dependent degradation of ubiquitinated proteins. The regulatory (or ATPase) complex confers ATP dependency and substrate specificity to the 26S complex. This Xenopus laevis (African clawed frog) protein is 26S proteasome regulatory subunit 7 (psmc2).